The primary structure comprises 352 residues: Protein-glutamate methylesterase/protein-glutamine glutaminase 2 (352 aa).

The 116-residue stretch at 1 to 116 folds into the Response regulatory domain; the sequence is MVVDDSAVVR…KQFLTDSADE (116 aa). 4-aspartylphosphate is present on D50. One can recognise a CheB-type methylesterase domain in the interval 162-352; the sequence is AQTTERIVAI…MAREIVTQLQ (191 aa). Residues S174, H200, and D296 contribute to the active site.

This sequence belongs to the CheB family. Phosphorylated by CheA. Phosphorylation of the N-terminal regulatory domain activates the methylesterase activity.

The protein resides in the cytoplasm. The enzyme catalyses [protein]-L-glutamate 5-O-methyl ester + H2O = L-glutamyl-[protein] + methanol + H(+). It carries out the reaction L-glutaminyl-[protein] + H2O = L-glutamyl-[protein] + NH4(+). Involved in chemotaxis. Part of a chemotaxis signal transduction system that modulates chemotaxis in response to various stimuli. Catalyzes the demethylation of specific methylglutamate residues introduced into the chemoreceptors (methyl-accepting chemotaxis proteins or MCP) by CheR. Also mediates the irreversible deamidation of specific glutamine residues to glutamic acid. In Xanthomonas campestris pv. campestris (strain ATCC 33913 / DSM 3586 / NCPPB 528 / LMG 568 / P 25), this protein is Protein-glutamate methylesterase/protein-glutamine glutaminase 2.